The chain runs to 226 residues: UPF0758 protein PputW619_0186 (226 aa).

The region spanning 102–224 (ALESPSAVRR…PLSMVEQGWI (123 aa)) is the MPN domain. Zn(2+) is bound by residues His173, His175, and Asp186. The JAMM motif motif lies at 173 to 186 (HNHPSGNSEPSQDD).

The protein belongs to the UPF0758 family.

The sequence is that of UPF0758 protein PputW619_0186 from Pseudomonas putida (strain W619).